The primary structure comprises 118 residues: Small ribosomal subunit protein uS13 (118 aa).

The segment at 94–118 (GLPVRGQRTKTNARTRKGPRKPIKK) is disordered.

Belongs to the universal ribosomal protein uS13 family. In terms of assembly, part of the 30S ribosomal subunit. Forms a loose heterodimer with protein S19. Forms two bridges to the 50S subunit in the 70S ribosome.

Its function is as follows. Located at the top of the head of the 30S subunit, it contacts several helices of the 16S rRNA. In the 70S ribosome it contacts the 23S rRNA (bridge B1a) and protein L5 of the 50S subunit (bridge B1b), connecting the 2 subunits; these bridges are implicated in subunit movement. Contacts the tRNAs in the A and P-sites. This is Small ribosomal subunit protein uS13 from Histophilus somni (strain 129Pt) (Haemophilus somnus).